Reading from the N-terminus, the 213-residue chain is ATP-dependent Clp protease proteolytic subunit (213 aa).

The Nucleophile role is filled by serine 114. Histidine 139 is a catalytic residue.

It belongs to the peptidase S14 family. As to quaternary structure, fourteen ClpP subunits assemble into 2 heptameric rings which stack back to back to give a disk-like structure with a central cavity, resembling the structure of eukaryotic proteasomes.

Its subcellular location is the cytoplasm. It carries out the reaction Hydrolysis of proteins to small peptides in the presence of ATP and magnesium. alpha-casein is the usual test substrate. In the absence of ATP, only oligopeptides shorter than five residues are hydrolyzed (such as succinyl-Leu-Tyr-|-NHMec, and Leu-Tyr-Leu-|-Tyr-Trp, in which cleavage of the -Tyr-|-Leu- and -Tyr-|-Trp bonds also occurs).. Its function is as follows. Cleaves peptides in various proteins in a process that requires ATP hydrolysis. Has a chymotrypsin-like activity. Plays a major role in the degradation of misfolded proteins. The protein is ATP-dependent Clp protease proteolytic subunit of Ectopseudomonas mendocina (strain ymp) (Pseudomonas mendocina).